Consider the following 448-residue polypeptide: Inositol hexakisphosphate kinase 2 (448 aa).

ATP is bound by residues 229–231 (ENL) and D242. Substrate is bound by residues 238 to 246 (PCVLDLKMG), K244, and 258 to 265 (KAANQIRK). Residue D405 participates in ATP binding. Substrate is bound at residue H408.

Belongs to the inositol phosphokinase (IPK) family. Highly expressed in brain and lung, and at slightly lower levels in liver, kidney and testis.

Its subcellular location is the nucleus. The catalysed reaction is 1D-myo-inositol hexakisphosphate + ATP = 5-diphospho-1D-myo-inositol 1,2,3,4,6-pentakisphosphate + ADP. It participates in phospholipid metabolism; phosphatidylinositol metabolism. Its function is as follows. Converts inositol hexakisphosphate (InsP6) to diphosphoinositol pentakisphosphate (InsP7/PP-InsP5). May play a role in the regulation of Na(+)-dependent phosphate cotransport, possibly via its role in diphosphoinositol pentakisphosphate (InsP7/PP-InsP5) biosynthesis. The sequence is that of Inositol hexakisphosphate kinase 2 (Ip6k2) from Mus musculus (Mouse).